Consider the following 528-residue polypeptide: NAD(P)H-quinone oxidoreductase chain 4 1 (528 aa).

14 consecutive transmembrane segments (helical) span residues 7–27 (FPWL…IPLI), 32–52 (WVRW…AYVF), 86–106 (LSLP…VAAW), 114–134 (LFFF…LAQD), 136–156 (LLFF…ISIW), 168–188 (FILY…AMAF), 208–228 (ALEL…LPIF), 242–262 (SAPI…YGLI), 276–296 (FAPV…LAAF), 310–330 (IAHM…GING), 331–351 (AVLQ…LTGI), 375–395 (FALF…SGFV), 417–437 (GIAL…LSML), and 463–483 (MAVA…PRLA).

This sequence belongs to the complex I subunit 4 family.

It localises to the cellular thylakoid membrane. The enzyme catalyses a plastoquinone + NADH + (n+1) H(+)(in) = a plastoquinol + NAD(+) + n H(+)(out). It carries out the reaction a plastoquinone + NADPH + (n+1) H(+)(in) = a plastoquinol + NADP(+) + n H(+)(out). In terms of biological role, NDH-1 shuttles electrons from NAD(P)H, via FMN and iron-sulfur (Fe-S) centers, to quinones in the respiratory chain. The immediate electron acceptor for the enzyme in this species is believed to be plastoquinone. Couples the redox reaction to proton translocation (for every two electrons transferred, four hydrogen ions are translocated across the cytoplasmic membrane), and thus conserves the redox energy in a proton gradient. The chain is NAD(P)H-quinone oxidoreductase chain 4 1 from Synechococcus sp. (strain JA-2-3B'a(2-13)) (Cyanobacteria bacterium Yellowstone B-Prime).